The following is a 220-amino-acid chain: 26S proteasome non-ATPase regulatory subunit 9 (220 aa).

Coiled coils occupy residues 4–32 and 61–91; these read GTTT…GQIL and RLAR…YHSE. Residues 102 to 200 form the PDZ domain; it reads RASALDLDSD…QLDLILVPKT (99 aa).

This sequence belongs to the proteasome subunit p27 family. In terms of assembly, interacts with PI31; this interaction is increased by PI31 ADP-ribosylation. Interacts with Rpt5.

In terms of biological role, acts as a chaperone during the assembly of the 26S proteasome, specifically of the base subcomplex of the PA700/19S regulatory complex (RC). In Drosophila melanogaster (Fruit fly), this protein is 26S proteasome non-ATPase regulatory subunit 9.